We begin with the raw amino-acid sequence, 203 residues long: GTP cyclohydrolase-2 (203 aa).

49–53 (RIHSE) is a binding site for GTP. Zn(2+)-binding residues include cysteine 54, cysteine 65, and cysteine 67. GTP is bound by residues glutamine 70, 92–94 (EGR), and threonine 114. Aspartate 126 (proton acceptor) is an active-site residue. The active-site Nucleophile is arginine 128. 2 residues coordinate GTP: threonine 149 and lysine 154.

This sequence belongs to the GTP cyclohydrolase II family. The cofactor is Zn(2+).

The catalysed reaction is GTP + 4 H2O = 2,5-diamino-6-hydroxy-4-(5-phosphoribosylamino)-pyrimidine + formate + 2 phosphate + 3 H(+). Its pathway is cofactor biosynthesis; riboflavin biosynthesis; 5-amino-6-(D-ribitylamino)uracil from GTP: step 1/4. Functionally, catalyzes the conversion of GTP to 2,5-diamino-6-ribosylamino-4(3H)-pyrimidinone 5'-phosphate (DARP), formate and pyrophosphate. The sequence is that of GTP cyclohydrolase-2 from Shewanella oneidensis (strain ATCC 700550 / JCM 31522 / CIP 106686 / LMG 19005 / NCIMB 14063 / MR-1).